The primary structure comprises 501 residues: ATP synthase subunit alpha (501 aa).

ATP is bound at residue 169-176; the sequence is GDRQTGKT.

Belongs to the ATPase alpha/beta chains family. As to quaternary structure, F-type ATPases have 2 components, CF(1) - the catalytic core - and CF(0) - the membrane proton channel. CF(1) has five subunits: alpha(3), beta(3), gamma(1), delta(1), epsilon(1). CF(0) has three main subunits: a(1), b(2) and c(9-12). The alpha and beta chains form an alternating ring which encloses part of the gamma chain. CF(1) is attached to CF(0) by a central stalk formed by the gamma and epsilon chains, while a peripheral stalk is formed by the delta and b chains.

The protein resides in the cell membrane. The enzyme catalyses ATP + H2O + 4 H(+)(in) = ADP + phosphate + 5 H(+)(out). In terms of biological role, produces ATP from ADP in the presence of a proton gradient across the membrane. The alpha chain is a regulatory subunit. This is ATP synthase subunit alpha from Streptococcus pneumoniae serotype 19F (strain G54).